The chain runs to 344 residues: tRNA N6-adenosine threonylcarbamoyltransferase (344 aa).

H111 and H115 together coordinate Fe cation. Substrate-binding positions include 134–138, D167, G180, and N273; that span reads LVSGG. D301 serves as a coordination point for Fe cation.

The protein belongs to the KAE1 / TsaD family. Fe(2+) serves as cofactor.

It localises to the cytoplasm. It catalyses the reaction L-threonylcarbamoyladenylate + adenosine(37) in tRNA = N(6)-L-threonylcarbamoyladenosine(37) in tRNA + AMP + H(+). Required for the formation of a threonylcarbamoyl group on adenosine at position 37 (t(6)A37) in tRNAs that read codons beginning with adenine. Is involved in the transfer of the threonylcarbamoyl moiety of threonylcarbamoyl-AMP (TC-AMP) to the N6 group of A37, together with TsaE and TsaB. TsaD likely plays a direct catalytic role in this reaction. This is tRNA N6-adenosine threonylcarbamoyltransferase from Cupriavidus necator (strain ATCC 17699 / DSM 428 / KCTC 22496 / NCIMB 10442 / H16 / Stanier 337) (Ralstonia eutropha).